An 85-amino-acid chain; its full sequence is Large ribosomal subunit protein bL27 (85 aa).

Residues 1–23 are disordered; the sequence is MAHKKAGGSSRNGRDSESKRLGV.

It belongs to the bacterial ribosomal protein bL27 family.

The sequence is that of Large ribosomal subunit protein bL27 from Nitrosococcus oceani (strain ATCC 19707 / BCRC 17464 / JCM 30415 / NCIMB 11848 / C-107).